The sequence spans 1126 residues: Protein translocase subunit SecA (1126 aa).

ATP-binding positions include Q175, 193 to 197 (GEGKT), and D694. Residues 1060–1126 (VQEAAPEKHE…KYKNCHGQGL (67 aa)) form a disordered region. Basic and acidic residues predominate over residues 1064–1080 (APEKHEDMSRYRTEKTD). Zn(2+) contacts are provided by C1110, C1112, C1121, and H1122.

The protein belongs to the SecA family. In terms of assembly, monomer and homodimer. Part of the essential Sec protein translocation apparatus which comprises SecA, SecYEG and auxiliary proteins SecDF. Other proteins may also be involved. Requires Zn(2+) as cofactor.

Its subcellular location is the cell inner membrane. It is found in the cytoplasm. The enzyme catalyses ATP + H2O + cellular proteinSide 1 = ADP + phosphate + cellular proteinSide 2.. Part of the Sec protein translocase complex. Interacts with the SecYEG preprotein conducting channel. Has a central role in coupling the hydrolysis of ATP to the transfer of proteins into and across the cell membrane, serving as an ATP-driven molecular motor driving the stepwise translocation of polypeptide chains across the membrane. This is Protein translocase subunit SecA from Parabacteroides distasonis (strain ATCC 8503 / DSM 20701 / CIP 104284 / JCM 5825 / NCTC 11152).